Reading from the N-terminus, the 336-residue chain is Methionyl-tRNA formyltransferase (336 aa).

Position 112–115 (112–115 (SILP)) interacts with (6S)-5,6,7,8-tetrahydrofolate.

This sequence belongs to the Fmt family.

The catalysed reaction is L-methionyl-tRNA(fMet) + (6R)-10-formyltetrahydrofolate = N-formyl-L-methionyl-tRNA(fMet) + (6S)-5,6,7,8-tetrahydrofolate + H(+). Functionally, attaches a formyl group to the free amino group of methionyl-tRNA(fMet). The formyl group appears to play a dual role in the initiator identity of N-formylmethionyl-tRNA by promoting its recognition by IF2 and preventing the misappropriation of this tRNA by the elongation apparatus. The sequence is that of Methionyl-tRNA formyltransferase from Trichodesmium erythraeum (strain IMS101).